The following is a 40-amino-acid chain: Photosystem II reaction center protein J (40 aa).

The helical transmembrane segment at 8–28 (IPLWLIGTVTGILVIGLIGFF) threads the bilayer.

The protein belongs to the PsbJ family. As to quaternary structure, PSII is composed of 1 copy each of membrane proteins PsbA, PsbB, PsbC, PsbD, PsbE, PsbF, PsbH, PsbI, PsbJ, PsbK, PsbL, PsbM, PsbT, PsbX, PsbY, PsbZ, Psb30/Ycf12, at least 3 peripheral proteins of the oxygen-evolving complex and a large number of cofactors. It forms dimeric complexes.

The protein resides in the plastid. It localises to the chloroplast thylakoid membrane. Functionally, one of the components of the core complex of photosystem II (PSII). PSII is a light-driven water:plastoquinone oxidoreductase that uses light energy to abstract electrons from H(2)O, generating O(2) and a proton gradient subsequently used for ATP formation. It consists of a core antenna complex that captures photons, and an electron transfer chain that converts photonic excitation into a charge separation. The protein is Photosystem II reaction center protein J of Zea mays (Maize).